The following is a 532-amino-acid chain: Phosphoenolpyruvate carboxykinase (ATP) (532 aa).

3 residues coordinate substrate: R60, Y194, and K200. Residues K200, H219, and 237-245 (GLSGTGKTT) contribute to the ATP site. Residues K200 and H219 each coordinate Mn(2+). D258 contacts Mn(2+). The ATP site is built by E286, R324, and T449. A substrate-binding site is contributed by R324.

The protein belongs to the phosphoenolpyruvate carboxykinase (ATP) family. Mn(2+) serves as cofactor.

The protein resides in the cytoplasm. It catalyses the reaction oxaloacetate + ATP = phosphoenolpyruvate + ADP + CO2. The protein operates within carbohydrate biosynthesis; gluconeogenesis. Functionally, involved in the gluconeogenesis. Catalyzes the conversion of oxaloacetate (OAA) to phosphoenolpyruvate (PEP) through direct phosphoryl transfer between the nucleoside triphosphate and OAA. The polypeptide is Phosphoenolpyruvate carboxykinase (ATP) (Roseobacter denitrificans (strain ATCC 33942 / OCh 114) (Erythrobacter sp. (strain OCh 114))).